The following is a 512-amino-acid chain: NAD(P)H-quinone oxidoreductase chain 4, chloroplastic (512 aa).

Helical transmembrane passes span 4–24 (LPWL…IPFI), 34–54 (WYAL…FGYH), 87–107 (MPLV…AWPV), 111–131 (AKLF…VFVS), 134–154 (LLLF…LLLV), 167–187 (FILY…TMAF), 210–230 (ILLY…FPLH), 241–261 (HYST…YALI), 273–293 (LIFA…AALT), 312–332 (MGFV…GAVL), 333–353 (QMIS…TTYD), 373–395 (TFAM…GFVA), 416–436 (IITF…LSML), and 462–482 (IFVI…PKMA).

It belongs to the complex I subunit 4 family.

It localises to the plastid. It is found in the chloroplast thylakoid membrane. It carries out the reaction a plastoquinone + NADH + (n+1) H(+)(in) = a plastoquinol + NAD(+) + n H(+)(out). It catalyses the reaction a plastoquinone + NADPH + (n+1) H(+)(in) = a plastoquinol + NADP(+) + n H(+)(out). This is NAD(P)H-quinone oxidoreductase chain 4, chloroplastic from Chlorokybus atmophyticus (Soil alga).